A 98-amino-acid polypeptide reads, in one-letter code: NADH-ubiquinone oxidoreductase chain 4L (98 aa).

The next 3 membrane-spanning stretches (helical) occupy residues 2–22, 29–49, and 61–81; these read PPIFTNVILAFATAFLGTLIF, SLLCLEGMMLSLFILSTLIIL, and ILLLVFAACEAAIGLALLVMV.

It belongs to the complex I subunit 4L family. As to quaternary structure, core subunit of respiratory chain NADH dehydrogenase (Complex I) which is composed of 45 different subunits.

Its subcellular location is the mitochondrion inner membrane. The enzyme catalyses a ubiquinone + NADH + 5 H(+)(in) = a ubiquinol + NAD(+) + 4 H(+)(out). Its function is as follows. Core subunit of the mitochondrial membrane respiratory chain NADH dehydrogenase (Complex I) which catalyzes electron transfer from NADH through the respiratory chain, using ubiquinone as an electron acceptor. Part of the enzyme membrane arm which is embedded in the lipid bilayer and involved in proton translocation. The protein is NADH-ubiquinone oxidoreductase chain 4L (MT-ND4L) of Avahi occidentalis (Western woolly lemur).